The primary structure comprises 643 residues: MSNMDFLPISKEDLKKRNIDVLDFIIVTGDAYVDHPSFGTAIIGRVLEREGFTVGIIAQPNWNNIEDFKKLGKPKYGFLVNSGNIDSMVNHYTASKKKRHDDFYSPGGKSGYRPDRAVIVYCNKIKEAFKDSPIIIGGIEASLRRFAHYDYWDNSVRRSILEDSSADLLIYGMGEKPIVQVSNLLRYGMKIDSIKNVRGTTYIEKDIFSLKDYIEIPSFEEVSTNKKSYAEAYKIQYYEQDSIRGKTLVQKHKERYVVQNPPQPPLSQEEMDEVYALPYARTYHPMYEAEGGIPAIKEVKFSITSHRGCYGSCSFCALTFHQGRVIQNRSQDSILKEANMMTNMKDFKGYIHDVGGPTANFRHRACKVQEKHGTCKNKQCVFPKACKNLIVDHKEYLSLLRKIRKIPNVKKVFIRSGIRFDYLMYDKNDEFFKELCEHHISGQLKVAPEHISDKVLNLMGKPTRNVYDSFVKKYYDINKKIHKNQFLVPYLMSSHPGSDLKAAIELAQYIKKMGYTPEQVQDFYPTPGSLSTTMYYTGINPLTEEKVYIPKDQKEKRMQRALLQFSIHDNYDLVKEALIKAHREDLIGNGPDCLIPYNKPYKKSHKKNNAKNNNNHYNKNNNKNKDISKKNKKNSLSKHKKRK.

In terms of domain architecture, Radical SAM core spans 295–566 (AIKEVKFSIT…RMQRALLQFS (272 aa)). Cysteine 309, cysteine 313, and cysteine 316 together coordinate [4Fe-4S] cluster. A disordered region spans residues 598–643 (NKPYKKSHKKNNAKNNNNHYNKNNNKNKDISKKNKKNSLSKHKKRK). A compositionally biased stretch (basic residues) spans 600-609 (PYKKSHKKNN). The segment covering 610–621 (AKNNNNHYNKNN) has biased composition (low complexity). Over residues 630-643 (KNKKNSLSKHKKRK) the composition is skewed to basic residues.

This sequence belongs to the UPF0313 family. [4Fe-4S] cluster is required as a cofactor.

This Clostridium botulinum (strain Okra / Type B1) protein is UPF0313 protein CLD_0573.